Consider the following 383-residue polypeptide: Mannan endo-1,4-beta-mannosidase (383 aa).

Residues 1–35 (MRNARSTLITTAGMAFAVLGLLFALAGPSAGRAEA) form the signal peptide. A CBM10 domain is found at 339 to 377 (GGSTGGTAPNGYPYCVNGGASDPDGDGWGWENSRSCVVR).

It belongs to the glycosyl hydrolase 5 (cellulase A) family. As to quaternary structure, monomer.

It carries out the reaction Random hydrolysis of (1-&gt;4)-beta-D-mannosidic linkages in mannans, galactomannans and glucomannans.. This Streptomyces lividans protein is Mannan endo-1,4-beta-mannosidase (manA).